We begin with the raw amino-acid sequence, 1745 residues long: Collagen alpha-3(V) chain (1745 aa).

Positions Met1 to Ala29 are cleaved as a signal peptide. The Laminin G-like domain maps to Asp62–Cys224. N-linked (GlcNAc...) asparagine glycosylation is found at Asn102 and Asn141. Residues Gln211–Glu391 are nonhelical region. Disordered stretches follow at residues Ala230–Pro304, Arg322–Ser362, Gly387–Pro439, and Ser476–Leu1492. The span at Pro244 to Asn267 shows a compositional bias: basic residues. A glycan (O-linked (Xyl...) (chondroitin sulfate) serine) is linked at Ser349. Collagen-like domains follow at residues Glu391 to Gly440 and Gly482 to Arg538. The interval Gly392–Pro1489 is triple-helical region. Pro residues predominate over residues Ser406–Ala424. 3 stretches are compositionally biased toward low complexity: residues Leu426–Pro439, Arg489–Pro499, and Glu597–Thr619. The span at Gln724–Asp733 shows a compositional bias: basic and acidic residues. Residues Pro765–Leu792 are compositionally biased toward low complexity. 3 Collagen-like domains span residues Gly824–Pro877, Gly905–Gly950, and Leu951–Gly989. Residues Leu967 to Pro979 are compositionally biased toward low complexity. Over residues Gly1016–Gly1025 the composition is skewed to gly residues. Composition is skewed to low complexity over residues Ala1116 to Pro1126 and Val1141 to Leu1152. Gly residues predominate over residues Gly1190–Gly1199. The span at Pro1213–Pro1222 shows a compositional bias: pro residues. A compositionally biased stretch (low complexity) spans Ser1234–Pro1243. Positions Met1318–Lys1330 are enriched in basic and acidic residues. The segment covering Ile1405–Glu1416 has biased composition (low complexity). The segment covering Gln1429–Pro1443 has biased composition (pro residues). Residues Gly1430–Ala1488 form the Collagen-like 6 domain. A compositionally biased stretch (low complexity) spans Pro1458–Pro1479. Positions Glu1514–Ser1744 constitute a Fibrillar collagen NC1 domain. Cystine bridges form between Cys1585-Cys1742 and Cys1651-Cys1696.

It belongs to the fibrillar collagen family. Trimers of two alpha 1(V) and one alpha 2(V) chains in most tissues and trimers of one alpha 1(V), one alpha 2(V), and one alpha 3(V) chains in placenta. Prolines at the third position of the tripeptide repeating unit (G-X-Y) are hydroxylated in some or all of the chains. As to expression, detected in fibroblasts (at protein level). Detected in urine (at protein level).

Its subcellular location is the secreted. It is found in the extracellular space. It localises to the extracellular matrix. Its function is as follows. Type V collagen is a member of group I collagen (fibrillar forming collagen). It is a minor connective tissue component of nearly ubiquitous distribution. Type V collagen binds to DNA, heparan sulfate, thrombospondin, heparin, and insulin. This is Collagen alpha-3(V) chain (COL5A3) from Homo sapiens (Human).